The following is an 89-amino-acid chain: Co-chaperonin GroES (89 aa).

The protein belongs to the GroES chaperonin family. In terms of assembly, heptamer of 7 subunits arranged in a ring. Interacts with the chaperonin GroEL.

It is found in the cytoplasm. In terms of biological role, together with the chaperonin GroEL, plays an essential role in assisting protein folding. The GroEL-GroES system forms a nano-cage that allows encapsulation of the non-native substrate proteins and provides a physical environment optimized to promote and accelerate protein folding. GroES binds to the apical surface of the GroEL ring, thereby capping the opening of the GroEL channel. This Parabacteroides distasonis (strain ATCC 8503 / DSM 20701 / CIP 104284 / JCM 5825 / NCTC 11152) protein is Co-chaperonin GroES.